We begin with the raw amino-acid sequence, 356 residues long: NADH dehydrogenase (ubiquinone) complex I, assembly factor 6 homolog (356 aa).

The transit peptide at 1 to 41 (MIRNSGRILFNSLKNSNVKLINRNVIINSNIRLFSTSTNNT) directs the protein to the mitochondrion.

Belongs to the NDUFAF6 family.

It is found in the mitochondrion inner membrane. Involved in the assembly of mitochondrial NADH:ubiquinone oxidoreductase complex (complex I) at early stages. The sequence is that of NADH dehydrogenase (ubiquinone) complex I, assembly factor 6 homolog from Dictyostelium discoideum (Social amoeba).